Consider the following 275-residue polypeptide: Dermonecrotic toxin SpaSicTox-betaIIA2 (275 aa).

H5 is an active-site residue. E25 and D27 together coordinate Mg(2+). H41 (nucleophile) is an active-site residue. 2 cysteine pairs are disulfide-bonded: C45–C51 and C47–C190. Position 85 (D85) interacts with Mg(2+).

The protein belongs to the arthropod phospholipase D family. Class II subfamily. Mg(2+) is required as a cofactor. As to expression, expressed by the venom gland.

The protein localises to the secreted. It carries out the reaction an N-(acyl)-sphingosylphosphocholine = an N-(acyl)-sphingosyl-1,3-cyclic phosphate + choline. It catalyses the reaction an N-(acyl)-sphingosylphosphoethanolamine = an N-(acyl)-sphingosyl-1,3-cyclic phosphate + ethanolamine. The enzyme catalyses a 1-acyl-sn-glycero-3-phosphocholine = a 1-acyl-sn-glycero-2,3-cyclic phosphate + choline. The catalysed reaction is a 1-acyl-sn-glycero-3-phosphoethanolamine = a 1-acyl-sn-glycero-2,3-cyclic phosphate + ethanolamine. Its function is as follows. Dermonecrotic toxins cleave the phosphodiester linkage between the phosphate and headgroup of certain phospholipids (sphingolipid and lysolipid substrates), forming an alcohol (often choline) and a cyclic phosphate. This toxin acts on sphingomyelin (SM). It may also act on ceramide phosphoethanolamine (CPE), lysophosphatidylcholine (LPC) and lysophosphatidylethanolamine (LPE), but not on lysophosphatidylserine (LPS), and lysophosphatidylglycerol (LPG). It acts by transphosphatidylation, releasing exclusively cyclic phosphate products as second products. Induces dermonecrosis, hemolysis, increased vascular permeability, edema, inflammatory response, and platelet aggregation. In Sicarius patagonicus (Six-eyed sand spider), this protein is Dermonecrotic toxin SpaSicTox-betaIIA2.